Reading from the N-terminus, the 426-residue chain is Lactate racemase (426 aa).

72–75 (DHTR) is a binding site for Ni(II)-pyridinium-3,5-bisthiocarboxylate mononucleotide. Catalysis depends on proton donor/acceptor residues histidine 108 and histidine 174. 2 residues coordinate Ni(II)-pyridinium-3,5-bisthiocarboxylate mononucleotide: lysine 184 and histidine 200. Glutamine 295 and lysine 298 together coordinate substrate.

The protein belongs to the lactate racemase family. In terms of assembly, homodimer. Ni(II)-pyridinium-3,5-bisthiocarboxylate mononucleotide serves as cofactor.

It catalyses the reaction (S)-lactate = (R)-lactate. Its activity is regulated as follows. Activation of the apo-enzyme requires the three accessory proteins LarB, LarE and LarC, that are involved in the biosynthesis of the nickel-pincer cofactor of LarA. In terms of biological role, catalyzes the interconversion between the D- and L-isomers of lactate. This chain is Lactate racemase, found in Thermoanaerobacterium thermosaccharolyticum (strain ATCC 7956 / DSM 571 / NCIMB 9385 / NCA 3814 / NCTC 13789 / WDCM 00135 / 2032) (Clostridium thermosaccharolyticum).